Consider the following 87-residue polypeptide: Kappa 1a-bungarotoxin (87 aa).

Positions 1–21 are cleaved as a signal peptide; it reads MKTLLLTLVVVTIVCLDLGYT. Intrachain disulfides connect Cys24–Cys42, Cys35–Cys63, Cys48–Cys52, Cys67–Cys79, and Cys80–Cys85.

This sequence belongs to the three-finger toxin family. Long-chain subfamily. Kappa-neurotoxin sub-subfamily. Homo- and heterodimer; non-covalently linked. Expressed by the venom gland.

It localises to the secreted. Postsynaptic neurotoxin that binds and inhibits neuronal nicotinic acetylcholine receptors (nAChR) with high affinity (IC(50)&lt;100 nM). Is a selective, and slowly reversible antagonist of alpha-3/CHRNA3-containing and some alpha-4/CHRNA4-containing AChRs. The chain is Kappa 1a-bungarotoxin from Bungarus candidus (Malayan krait).